The following is a 307-amino-acid chain: Thioredoxin reductase (307 aa).

34–41 (ESKAHGGQ) lines the FAD pocket. C134 and C137 form a disulfide bridge. 275-284 (DVRAKSFRQV) is a binding site for FAD.

The protein belongs to the class-II pyridine nucleotide-disulfide oxidoreductase family. Homodimer. FAD is required as a cofactor.

It localises to the cytoplasm. The enzyme catalyses [thioredoxin]-dithiol + NADP(+) = [thioredoxin]-disulfide + NADPH + H(+). This chain is Thioredoxin reductase (trxB), found in Treponema pallidum (strain Nichols).